Consider the following 71-residue polypeptide: uncharacterized protein (71 aa).

The disordered stretch occupies residues 1 to 20 (MQKLNKHLKKKKQKRKKMKK).

This is an uncharacterized protein from Methanocaldococcus jannaschii (strain ATCC 43067 / DSM 2661 / JAL-1 / JCM 10045 / NBRC 100440) (Methanococcus jannaschii).